The following is a 90-amino-acid chain: Large ribosomal subunit protein eL33 (90 aa).

It belongs to the eukaryotic ribosomal protein eL33 family.

The protein is Large ribosomal subunit protein eL33 of Methanopyrus kandleri (strain AV19 / DSM 6324 / JCM 9639 / NBRC 100938).